The following is a 493-amino-acid chain: Gamma-aminobutyric acid receptor subunit alpha-3 (493 aa).

An N-terminal signal peptide occupies residues 1-28; the sequence is MITTQMWHFYVTRVGLLLLISILPGTTG. A disordered region spans residues 27–54; sequence TGQGESRRQEPGDFVKQDIGGLSPKHAP. The Extracellular segment spans residues 29–276; the sequence is QGESRRQEPG…THFHLKRKIG (248 aa). A compositionally biased stretch (basic and acidic residues) spans 31–42; it reads ESRRQEPGDFVK. A glycan (N-linked (GlcNAc...) asparagine) is linked at asparagine 63. Arginine 119 is a binding site for 4-aminobutanoate. N-linked (GlcNAc...) asparagine glycans are attached at residues asparagine 163 and asparagine 176. Threonine 182 is a binding site for 4-aminobutanoate. Cysteine 191 and cysteine 205 are disulfide-bonded. Asparagine 228 carries N-linked (GlcNAc...) asparagine glycosylation. The next 3 helical transmembrane spans lie at 277–298, 304–325, and 338–359; these read YFVIQTYLPCIMTVILSQVSFW, VPARTVFGVTTVLTMTTLSISA, and MDWFIAVCYAFVFSALIEFATV. At 360–458 the chain is on the cytoplasmic side; that stretch reads NYFTKRSWAW…TYNSVSKVDK (99 aa). Phosphoserine is present on serine 427. Residue threonine 428 is modified to Phosphothreonine. Serine 434 and serine 443 each carry phosphoserine. Residues 459–480 form a helical membrane-spanning segment; it reads ISRIIFPVLFAIFNLVYWATYV.

It belongs to the ligand-gated ion channel (TC 1.A.9) family. Gamma-aminobutyric acid receptor (TC 1.A.9.5) subfamily. GABRA3 sub-subfamily. As to quaternary structure, heteropentamer, formed by a combination of alpha (GABRA1-6), beta (GABRB1-3), gamma (GABRG1-3), delta (GABRD), epsilon (GABRE), rho (GABRR1-3), pi (GABRP) and theta (GABRQ) chains, each subunit exhibiting distinct physiological and pharmacological properties. Binds UBQLN1. Interacts with GPHN. As to expression, expressed in most brain regions. Expressed in lungs, in alveolar epithelium.

The protein localises to the postsynaptic cell membrane. It is found in the cell membrane. The catalysed reaction is chloride(in) = chloride(out). Its function is as follows. Alpha subunit of the heteropentameric ligand-gated chloride channel gated by gamma-aminobutyric acid (GABA), a major inhibitory neurotransmitter in the brain. GABA-gated chloride channels, also named GABA(A) receptors (GABAAR), consist of five subunits arranged around a central pore and contain GABA active binding site(s) located at the alpha and beta subunit interface(s). When activated by GABA, GABAARs selectively allow the flow of chloride anions across the cell membrane down their electrochemical gradient. Chloride influx into the postsynaptic neuron following GABAAR opening decreases the neuron ability to generate a new action potential, thereby reducing nerve transmission. The chain is Gamma-aminobutyric acid receptor subunit alpha-3 from Rattus norvegicus (Rat).